Here is a 425-residue protein sequence, read N- to C-terminus: 5'-deoxyadenosine deaminase (425 aa).

Zn(2+)-binding residues include histidine 62 and histidine 64. Positions 91 and 183 each coordinate substrate. Zn(2+) is bound at residue histidine 210. 2 residues coordinate substrate: glutamate 213 and aspartate 298. Residue aspartate 298 participates in Zn(2+) binding.

Belongs to the metallo-dependent hydrolases superfamily. MTA/SAH deaminase family. As to quaternary structure, homotetramer. It depends on Zn(2+) as a cofactor.

It carries out the reaction 5'-deoxyadenosine + H2O + H(+) = 5'-deoxyinosine + NH4(+). It catalyses the reaction S-adenosyl-L-homocysteine + H2O + H(+) = S-inosyl-L-homocysteine + NH4(+). The enzyme catalyses S-methyl-5'-thioadenosine + H2O + H(+) = S-methyl-5'-thioinosine + NH4(+). The catalysed reaction is adenosine + H2O + H(+) = inosine + NH4(+). Its pathway is amino-acid biosynthesis; S-adenosyl-L-methionine biosynthesis. Functionally, catalyzes the deamination of three SAM-derived enzymatic products, namely 5'-deoxyadenosine, S-adenosyl-L-homocysteine, and 5'-methylthioadenosine, to produce the inosine analogs. Can also deaminate adenosine. The preferred substrate for this enzyme is 5'-deoxyadenosine, but all these substrates are efficiently deaminated. Likely functions in a S-adenosyl-L-methionine (SAM) recycling pathway from S-adenosyl-L-homocysteine (SAH) produced from SAM-dependent methylation reactions. May also be involved in the recycling of 5'-deoxyadenosine, whereupon the 5'-deoxyribose moiety of 5'-deoxyinosine is further metabolized to deoxyhexoses used for the biosynthesis of aromatic amino acids in methanogens. The polypeptide is 5'-deoxyadenosine deaminase (Methanosphaera stadtmanae (strain ATCC 43021 / DSM 3091 / JCM 11832 / MCB-3)).